The sequence spans 144 residues: Deoxyuridine 5'-triphosphate nucleotidohydrolase (144 aa).

Substrate contacts are provided by residues 63–65 (RSG), Asn-76, and 80–82 (TVD).

The protein belongs to the dUTPase family. Requires Mg(2+) as cofactor.

The enzyme catalyses dUTP + H2O = dUMP + diphosphate + H(+). The protein operates within pyrimidine metabolism; dUMP biosynthesis; dUMP from dCTP (dUTP route): step 2/2. Functionally, this enzyme is involved in nucleotide metabolism: it produces dUMP, the immediate precursor of thymidine nucleotides and it decreases the intracellular concentration of dUTP so that uracil cannot be incorporated into DNA. The sequence is that of Deoxyuridine 5'-triphosphate nucleotidohydrolase from Flavobacterium johnsoniae (strain ATCC 17061 / DSM 2064 / JCM 8514 / BCRC 14874 / CCUG 350202 / NBRC 14942 / NCIMB 11054 / UW101) (Cytophaga johnsonae).